The chain runs to 1184 residues: Probable phospholipid-transporting ATPase 12 (1184 aa).

Over 1–75 (MATVSGRRRK…TTKYTLATFL (75 aa)) the chain is Cytoplasmic. A helical transmembrane segment spans residues 76–97 (PKSLFEQFRRVANFYFLVVGIL). Over 98 to 101 (SFTP) the chain is Extracellular. A helical transmembrane segment spans residues 102–124 (LAPYTAVSAIVPLTFVILATMFK). Residues 125–306 (EGVEDWRRKQ…SMIERKMDKI (182 aa)) are Cytoplasmic-facing. The helical transmembrane segment at 307–328 (IYLMFLMVFSLAFFGSVLFGIW) threads the bilayer. The Extracellular portion of the chain corresponds to 329–364 (TRDDFQNGVMERWYLKPDDSSIFFDPKRAPMAAIYH). The helical transmembrane segment at 365 to 382 (FLTALMLNSYFIPISLYV) threads the bilayer. At 383-921 (SIEIVKVLQS…HGHWCYRRIS (539 aa)) the chain is on the cytoplasmic side. D430 acts as the 4-aspartylphosphate intermediate in catalysis. Residues D866 and D870 each coordinate Mg(2+). The chain crosses the membrane as a helical span at residues 922–941 (KMICYFFYKNITFGFTLFLY). At 942–955 (EAYTSFSATPAYND) the chain is on the extracellular side. Residues 956 to 975 (WYLSLYSVFFTSLPVICLGI) form a helical membrane-spanning segment. Topologically, residues 976-1005 (FDQDVSAPFCLKFPVLYQEGVQNLLFSWRR) are cytoplasmic. A helical membrane pass occupies residues 1006–1028 (ILSWMFHGFCSAIIIFFLCKTSL). The Extracellular segment spans residues 1029–1041 (ESQAFNHEGKTAG). A helical membrane pass occupies residues 1042–1064 (RDILGGTMYTCVVWVVSLQMVLT). Over 1065–1070 (ISYFTL) the chain is Cytoplasmic. The helical transmembrane segment at 1071–1091 (IQHVVVWGSVVIWYLFLMVYG) threads the bilayer. At 1092-1108 (SLPIRMSTDAYMVFLEA) the chain is on the extracellular side. The helical transmembrane segment at 1109–1133 (LAPAPSYWITTLFVVLSTMMPYFIF) threads the bilayer. The Cytoplasmic portion of the chain corresponds to 1134–1184 (SAIQMRFFPMSHGTVQLLRYEDQCSNSGNFEMGRQGSVRPTLVMRSHQPES).

Belongs to the cation transport ATPase (P-type) (TC 3.A.3) family. Type IV subfamily.

It localises to the membrane. It catalyses the reaction ATP + H2O + phospholipidSide 1 = ADP + phosphate + phospholipidSide 2.. Functionally, involved in transport of phospholipids. This Arabidopsis thaliana (Mouse-ear cress) protein is Probable phospholipid-transporting ATPase 12.